The chain runs to 857 residues: DNA mismatch repair protein MutS (857 aa).

603–610 (GPNMAGKS) serves as a coordination point for ATP.

This sequence belongs to the DNA mismatch repair MutS family.

In terms of biological role, this protein is involved in the repair of mismatches in DNA. It is possible that it carries out the mismatch recognition step. This protein has a weak ATPase activity. In Methanothrix thermoacetophila (strain DSM 6194 / JCM 14653 / NBRC 101360 / PT) (Methanosaeta thermophila), this protein is DNA mismatch repair protein MutS.